The sequence spans 239 residues: MVIKAQSPAGFAEEYIIESIWNNRFAPGTILPAERELSELIGVTRTTLREVLQRLARDGWLTIQHGKPTKVNNFWETSGLNILETLARLDHESVPQLIDNLLSVRTNISTIFIRTAFRQHPDKALEVLATANAIEDHADAFATLDYNIFRGLAFASGNPIYGLIINGMKGLYTRIGRHYFANPEARSLALGFYHKLSEICSEGMHDQVYETVRRYGRDSGEIWHRMQKNLPGDLAIHGH.

An HTH gntR-type domain is found at Gln6–Phe74. Residues Glu34–Gln53 constitute a DNA-binding region (H-T-H motif).

Homodimer.

The protein localises to the cytoplasm. In terms of biological role, multifunctional regulator of fatty acid metabolism. The polypeptide is Fatty acid metabolism regulator protein (Enterobacter sp. (strain 638)).